The sequence spans 300 residues: Free fatty acid receptor 1 (300 aa).

At 1–8 (MDLPPQLS) the chain is on the extracellular side. Residues 9–31 (FALYVSAFALGFPLNLLAIRGAV) traverse the membrane as a helical segment. Residues 32-41 (SHAKLRLTPS) lie on the Cytoplasmic side of the membrane. A helical transmembrane segment spans residues 42-64 (LVYTLHLGCSDLLLAITLPLKAV). Residues 65 to 79 (EALASGAWPLPLPFC) are Extracellular-facing. A disulfide bridge links Cys79 with Cys170. Residues 80-101 (PVFALAHFAPLYAGGGFLAALS) traverse the membrane as a helical segment. Over 102–121 (AGRYLGAAFPFGYQAIRRPR) the chain is Cytoplasmic. Residues 122 to 142 (YSWGVCVAIWALVLCHLGLAL) traverse the membrane as a helical segment. The Extracellular segment spans residues 143–178 (GLETSGSWLDNSTSSLGINIPVNGSPVCLEAWDPDS). The N-linked (GlcNAc...) asparagine glycan is linked to Asn153. The chain crosses the membrane as a helical span at residues 179 to 200 (ARPARLSFSILLFFLPLVITAF). Over 201–223 (CYVGCLRALVRSGLSHKRKLRAA) the chain is Cytoplasmic. Residues 224–248 (WVAGGALLTLLLCLGPYNASNVASF) traverse the membrane as a helical segment. Over 249–256 (INPDLGGS) the chain is Extracellular. A helical transmembrane segment spans residues 257–279 (WRKLGLITGAWSVVLNPLVTGYL). The Cytoplasmic segment spans residues 280-300 (GTGPGRGTICVTRTQRGTIQK).

It belongs to the G-protein coupled receptor 1 family. Expressed in pancreatic islet beta cells (at protein level). Expressed in pancreatic islet beta cells.

The protein resides in the cell membrane. With respect to regulation, is also activated by synthetic agonists, such as AM-8182, AM-6331 and TAK-875 (fasiglifam). AM-8182 is a full agonist, while AM-6331 and TAK-875 (fasiglifam) are partial agonists that potentiate the activity of the endogenous ligands, such as alpha-linolenic acid and gamma-linolenic acid. In terms of biological role, G-protein coupled receptor for medium and long chain saturated and unsaturated fatty acids that plays an important role in glucose homeostasis. Fatty acid binding increases glucose-stimulated insulin secretion, and may also enhance the secretion of glucagon-like peptide 1 (GLP-1). May also play a role in bone homeostasis; receptor signaling activates pathways that inhibit osteoclast differentiation. Ligand binding leads to a conformation change that triggers signaling via G-proteins that activate phospholipase C, leading to an increase of the intracellular calcium concentration. Seems to act through a G(q) and G(i)-mediated pathway. Mediates the anti-inflammatory effects of omega-3 polyunsaturated fatty acids (PUFAs) via inhibition of NLRP3 inflammasome activation. This Mus musculus (Mouse) protein is Free fatty acid receptor 1 (Ffar1).